The primary structure comprises 648 residues: Protein KASH5 (648 aa).

Over 1–606 (MHSILRSSLS…HSPGIRISQH (606 aa)) the chain is Cytoplasmic. Residues 206–228 (PEAEESANLESFGGEDPRPEGPA) form a disordered region. Residues 230 to 420 (AELLSNLEDL…EEQLSQSQEG (191 aa)) adopt a coiled-coil conformation. The segment covering 473 to 497 (EVEPEPEPEPEPEPEPEPQEVEFPS) has biased composition (acidic residues). A disordered region spans residues 473-545 (EVEPEPEPEP…EESWVLADPS (73 aa)). A helical; Anchor for type IV membrane protein transmembrane segment spans residues 607 to 627 (PLVPTPVLGLLLLLLLSILLF). At 628 to 648 (SQSPPPTWPHLQLYYLQPPPV) the chain is on the perinuclear space side.

As to quaternary structure, core component the LINC complex which is composed of inner nuclear membrane SUN domain-containing proteins coupled to outer nuclear membrane KASH domain-containing nesprins. SUN and KASH domain-containing proteins seem to bind each other promiscuously; however, differentially expression of LINC complex constituents is giving rise to specific assemblies. At least SUN1/2-containing core LINC complexes are proposed to be hexameric composed of three protomers of each KASH and SUN domain-containing protein. Interacts with SUN1; this interaction mediates its telomere localization by forming a SUN1:KASH5 LINC complex. Component of a probable SUN2:KASH5 LINC complex. Self-associates. Interacts with DYNC1H1, DCTN1, DYNC1I1/2 and PAFAH1B1; suggesting the association with the dynein-dynactin motor complex. Restricted to the testis and the early ootidogenesis ovary. Expressed in spermatocytes and oocytes (at protein level).

It is found in the nucleus outer membrane. The protein resides in the nucleus. It localises to the chromosome. The protein localises to the telomere. Its subcellular location is the nucleus envelope. In terms of biological role, as a component of the LINC (LInker of Nucleoskeleton and Cytoskeleton) complex, involved in the connection between the nuclear lamina and the cytoskeleton. The nucleocytoplasmic interactions established by the LINC complex play an important role in the transmission of mechanical forces across the nuclear envelope and in nuclear movement and positioning. Required for telomere attachment to nuclear envelope in the prophase of meiosis and for rapid telomere prophase movements implicating a SUN1/2:KASH5 LINC complex in which SUN1 and SUN2 seem to act at least partial redundantly. Required for homolog pairing during meiotic prophase in spermatocytes and probably oocytes. Essential for male and female gametogenesis. Recruits cytoplasmic dynein to telomere attachment sites at the nuclear envelope in spermatocytes. In oocytes is involved in meiotic resumption and spindle formation. The sequence is that of Protein KASH5 from Mus musculus (Mouse).